The chain runs to 181 residues: Bifunctional protein PyrR (181 aa).

A PRPP-binding motif is present at residues 100 to 112 (VVLVDDVIYTGRT).

Belongs to the purine/pyrimidine phosphoribosyltransferase family. PyrR subfamily. Homodimer and homohexamer; in equilibrium.

The enzyme catalyses UMP + diphosphate = 5-phospho-alpha-D-ribose 1-diphosphate + uracil. Functionally, regulates transcriptional attenuation of the pyrimidine nucleotide (pyr) operon by binding in a uridine-dependent manner to specific sites on pyr mRNA. This disrupts an antiterminator hairpin in the RNA and favors formation of a downstream transcription terminator, leading to a reduced expression of downstream genes. In terms of biological role, also displays a weak uracil phosphoribosyltransferase activity which is not physiologically significant. This is Bifunctional protein PyrR from Pelotomaculum thermopropionicum (strain DSM 13744 / JCM 10971 / SI).